We begin with the raw amino-acid sequence, 115 residues long: T cell receptor beta variable 18 (115 aa).

The first 21 residues, 1-21 (MDTRLLCCAVICLLGAGLSNA), serve as a signal peptide directing secretion. The Ig-like domain occupies 22–115 (GVMQNPRHLV…SAAYFCASSP (94 aa)). Cys-42 and Cys-111 are disulfide-bonded.

As to quaternary structure, alpha-beta TR is a heterodimer composed of an alpha and beta chain; disulfide-linked. The alpha-beta TR is associated with the transmembrane signaling CD3 coreceptor proteins to form the TR-CD3 (TcR or TCR). The assembly of alpha-beta TR heterodimers with CD3 occurs in the endoplasmic reticulum where a single alpha-beta TR heterodimer associates with one CD3D-CD3E heterodimer, one CD3G-CD3E heterodimer and one CD247 homodimer forming a stable octameric structure. CD3D-CD3E and CD3G-CD3E heterodimers preferentially associate with TR alpha and TR beta chains, respectively. The association of the CD247 homodimer is the last step of TcR assembly in the endoplasmic reticulum and is required for transport to the cell surface.

The protein resides in the cell membrane. V region of the variable domain of T cell receptor (TR) beta chain that participates in the antigen recognition. Alpha-beta T cell receptors are antigen specific receptors which are essential to the immune response and are present on the cell surface of T lymphocytes. Recognize peptide-major histocompatibility (MH) (pMH) complexes that are displayed by antigen presenting cells (APC), a prerequisite for efficient T cell adaptive immunity against pathogens. Binding of alpha-beta TR to pMH complex initiates TR-CD3 clustering on the cell surface and intracellular activation of LCK that phosphorylates the ITAM motifs of CD3G, CD3D, CD3E and CD247 enabling the recruitment of ZAP70. In turn ZAP70 phosphorylates LAT, which recruits numerous signaling molecules to form the LAT signalosome. The LAT signalosome propagates signal branching to three major signaling pathways, the calcium, the mitogen-activated protein kinase (MAPK) kinase and the nuclear factor NF-kappa-B (NF-kB) pathways, leading to the mobilization of transcription factors that are critical for gene expression and essential for T cell growth and differentiation. The T cell repertoire is generated in the thymus, by V-(D)-J rearrangement. This repertoire is then shaped by intrathymic selection events to generate a peripheral T cell pool of self-MH restricted, non-autoaggressive T cells. Post-thymic interaction of alpha-beta TR with the pMH complexes shapes TR structural and functional avidity. The polypeptide is T cell receptor beta variable 18 (Homo sapiens (Human)).